The chain runs to 278 residues: Urease accessory protein UreD (278 aa).

It belongs to the UreD family. In terms of assembly, ureD, UreF and UreG form a complex that acts as a GTP-hydrolysis-dependent molecular chaperone, activating the urease apoprotein by helping to assemble the nickel containing metallocenter of UreC. The UreE protein probably delivers the nickel.

The protein resides in the cytoplasm. Required for maturation of urease via the functional incorporation of the urease nickel metallocenter. The sequence is that of Urease accessory protein UreD from Escherichia coli.